Reading from the N-terminus, the 142-residue chain is Hemoglobin subunit alpha (142 aa).

Position 1 is an N-acetylserine (Ser1). The region spanning 1 to 142 is the Globin domain; the sequence is SLSDKDKAVV…LALALSEKYR (142 aa). An O2-binding site is contributed by His59. His88 is a binding site for heme b.

Belongs to the globin family. Heterotetramer of two alpha chains and two beta chains. Red blood cells.

Its function is as follows. Involved in oxygen transport from gills to the various peripheral tissues. This is Hemoglobin subunit alpha (hba) from Carassius auratus (Goldfish).